The sequence spans 228 residues: MAGQRLAAGFLQVPAVTRAYTAACVLTTAAVQLELLSPFQLYFNPHLVFRKFQVWRLITTFLFFGPLGFGFFFNMLFVFRYCRMLEEGSFRGRKADFVFMFLFGGVLMTLLGFLGSLFFLGQALMAMLVYVWSRRSPHVRVNFFGLLNFQAPFLPWALMGFSLLLGNSVVTDLLGILVGHIYYFLEDVFPNQPGGKRLLLTPSVLKLLLDDPQEDPDYLPLPEEQPEL.

The Cytoplasmic portion of the chain corresponds to 1 to 22; it reads MAGQRLAAGFLQVPAVTRAYTA. A helical transmembrane segment spans residues 23–43; that stretch reads ACVLTTAAVQLELLSPFQLYF. Residues 44–57 are Lumenal-facing; the sequence is NPHLVFRKFQVWRL. The helical transmembrane segment at 58 to 78 threads the bilayer; sequence ITTFLFFGPLGFGFFFNMLFV. Residues 79–98 are Cytoplasmic-facing; sequence FRYCRMLEEGSFRGRKADFV. A helical membrane pass occupies residues 99–119; it reads FMFLFGGVLMTLLGFLGSLFF. The Lumenal segment spans residues 120 to 168; the sequence is LGQALMAMLVYVWSRRSPHVRVNFFGLLNFQAPFLPWALMGFSLLLGNS. A helical transmembrane segment spans residues 169–189; sequence VVTDLLGILVGHIYYFLEDVF. The Cytoplasmic segment spans residues 190–228; it reads PNQPGGKRLLLTPSVLKLLLDDPQEDPDYLPLPEEQPEL.

This sequence belongs to the derlin family. Forms homo- and heterooligomers with DERL2 and, to a lesser extent, with DERL1. Interacts with VCP and EDEM1. Interacts with SELENOK and SELENOS. Interacts with the signal recognition particle/SRP and the SRP receptor; in the process of endoplasmic reticulum stress-induced pre-emptive quality control. Highly expressed in spleen, lung, liver, spleen and testis. Expressed at intermediate level in kidney. Weakly or not expressed in brain, heart and skeletal muscle.

It is found in the endoplasmic reticulum membrane. In terms of biological role, functional component of endoplasmic reticulum-associated degradation (ERAD) for misfolded lumenal glycoproteins, but not that of misfolded nonglycoproteins. May act by forming a channel that allows the retrotranslocation of misfolded glycoproteins into the cytosol where they are ubiquitinated and degraded by the proteasome. May mediate the interaction between VCP and the misfolded glycoproteins. May be involved in endoplasmic reticulum stress-induced pre-emptive quality control, a mechanism that selectively attenuates the translocation of newly synthesized proteins into the endoplasmic reticulum and reroutes them to the cytosol for proteasomal degradation. This chain is Derlin-3, found in Mus musculus (Mouse).